Reading from the N-terminus, the 377-residue chain is uncharacterized protein (377 aa).

Disordered stretches follow at residues Y10–N79, K91–E141, E182–T257, E265–E284, and L289–P326. Low complexity-rich tracts occupy residues I14–Q24, N46–N79, and N93–N124. Basic and acidic residues-rich tracts occupy residues E182 to E196 and Q209 to E218. The span at T221–T257 shows a compositional bias: low complexity. Basic and acidic residues-rich tracts occupy residues E265–N274 and N292–K303. The segment covering K311–K320 has biased composition (basic residues).

This is an uncharacterized protein from Dictyostelium discoideum (Social amoeba).